The sequence spans 411 residues: Serine hydroxymethyltransferase (411 aa).

Residues Leu-119 and 123–125 (GHL) each bind (6S)-5,6,7,8-tetrahydrofolate. The residue at position 228 (Lys-228) is an N6-(pyridoxal phosphate)lysine. 351 to 353 (SPF) provides a ligand contact to (6S)-5,6,7,8-tetrahydrofolate.

This sequence belongs to the SHMT family. In terms of assembly, homodimer. Requires pyridoxal 5'-phosphate as cofactor.

It localises to the cytoplasm. The enzyme catalyses (6R)-5,10-methylene-5,6,7,8-tetrahydrofolate + glycine + H2O = (6S)-5,6,7,8-tetrahydrofolate + L-serine. It functions in the pathway one-carbon metabolism; tetrahydrofolate interconversion. The protein operates within amino-acid biosynthesis; glycine biosynthesis; glycine from L-serine: step 1/1. Its function is as follows. Catalyzes the reversible interconversion of serine and glycine with tetrahydrofolate (THF) serving as the one-carbon carrier. This reaction serves as the major source of one-carbon groups required for the biosynthesis of purines, thymidylate, methionine, and other important biomolecules. Also exhibits THF-independent aldolase activity toward beta-hydroxyamino acids, producing glycine and aldehydes, via a retro-aldol mechanism. The sequence is that of Serine hydroxymethyltransferase from Clostridium novyi (strain NT).